Consider the following 349-residue polypeptide: Bifunctional nitrilase/nitrile hydratase NIT4A (349 aa).

In terms of domain architecture, CN hydrolase spans 29–301; it reads VRATVVQAST…EALISADLDL (273 aa). Residue E69 is the Proton acceptor of the active site. Catalysis depends on K156, which acts as the Proton donor. C190 serves as the catalytic Nucleophile.

Belongs to the carbon-nitrogen hydrolase superfamily. Nitrilase family. In terms of tissue distribution, expressed in roots, stems, cotyledons, leaves and flowers.

It localises to the cell membrane. The catalysed reaction is a nitrile + 2 H2O = a carboxylate + NH4(+). It catalyses the reaction 3-cyano-L-alanine + 2 H2O = L-aspartate + NH4(+). It carries out the reaction L-asparagine = 3-cyano-L-alanine + H2O. Functionally, highly specific for beta-cyano-L-alanine (Ala(CN)). Low activity with 3-phenylpropionitrile (PPN). Not associated with auxin production but may be involved in cyanide detoxification. This Nicotiana tabacum (Common tobacco) protein is Bifunctional nitrilase/nitrile hydratase NIT4A (NIT4A).